A 162-amino-acid polypeptide reads, in one-letter code: tRNA-specific adenosine deaminase (162 aa).

Positions 3–115 constitute a CMP/dCMP-type deaminase domain; sequence DSDKYFMKCA…KNLQKYICCK (113 aa). Zn(2+) is bound at residue His-54. The Proton donor role is filled by Glu-56. 2 residues coordinate Zn(2+): Cys-84 and Cys-87.

Belongs to the cytidine and deoxycytidylate deaminase family. Homodimer. The cofactor is Zn(2+).

It catalyses the reaction adenosine(34) in tRNA + H2O + H(+) = inosine(34) in tRNA + NH4(+). In terms of biological role, catalyzes the deamination of adenosine to inosine at the wobble position 34 of tRNA(Arg2). The protein is tRNA-specific adenosine deaminase of Buchnera aphidicola subsp. Baizongia pistaciae (strain Bp).